The chain runs to 350 residues: Protein RecA (350 aa).

65–72 (GPESSGKT) is a binding site for ATP.

Belongs to the RecA family.

The protein resides in the cytoplasm. Can catalyze the hydrolysis of ATP in the presence of single-stranded DNA, the ATP-dependent uptake of single-stranded DNA by duplex DNA, and the ATP-dependent hybridization of homologous single-stranded DNAs. It interacts with LexA causing its activation and leading to its autocatalytic cleavage. The polypeptide is Protein RecA (Nautilia profundicola (strain ATCC BAA-1463 / DSM 18972 / AmH)).